Consider the following 363-residue polypeptide: Probable dual-specificity RNA methyltransferase RlmN (363 aa).

Catalysis depends on glutamate 99, which acts as the Proton acceptor. Positions 105–341 constitute a Radical SAM core domain; the sequence is SENRMTACVS…VTVRKSHGAS (237 aa). A disulfide bridge links cysteine 112 with cysteine 346. [4Fe-4S] cluster contacts are provided by cysteine 119, cysteine 123, and cysteine 126. Residues 171 to 172, serine 204, 227 to 229, and asparagine 303 each bind S-adenosyl-L-methionine; these read GE and SLH. The active-site S-methylcysteine intermediate is cysteine 346.

This sequence belongs to the radical SAM superfamily. RlmN family. The cofactor is [4Fe-4S] cluster.

It is found in the cytoplasm. The catalysed reaction is adenosine(2503) in 23S rRNA + 2 reduced [2Fe-2S]-[ferredoxin] + 2 S-adenosyl-L-methionine = 2-methyladenosine(2503) in 23S rRNA + 5'-deoxyadenosine + L-methionine + 2 oxidized [2Fe-2S]-[ferredoxin] + S-adenosyl-L-homocysteine. It catalyses the reaction adenosine(37) in tRNA + 2 reduced [2Fe-2S]-[ferredoxin] + 2 S-adenosyl-L-methionine = 2-methyladenosine(37) in tRNA + 5'-deoxyadenosine + L-methionine + 2 oxidized [2Fe-2S]-[ferredoxin] + S-adenosyl-L-homocysteine. Specifically methylates position 2 of adenine 2503 in 23S rRNA and position 2 of adenine 37 in tRNAs. This Chlorobium phaeobacteroides (strain DSM 266 / SMG 266 / 2430) protein is Probable dual-specificity RNA methyltransferase RlmN.